Reading from the N-terminus, the 123-residue chain is Alpha-ketoglutarate dehydrogenase subunit 4, mitochondrial (123 aa).

Residues 1–8 (MIATPIRL) constitute a mitochondrion transit peptide.

The protein belongs to the alpha-ketoglutarate dehydrogenase component 4 family. In terms of assembly, component of the 2-oxoglutarate dehydrogenase complex (OGDC), also called alpha-ketoglutarate dehydrogenase (KGDH) complex. The copmplex is composed of the catalytic subunits OGDH (2-oxoglutarate dehydrogenase KGD1; also called E1 subunit), DLST (dihydrolipoamide succinyltransferase KGD2; also called E2 subunit) and DLD (dihydrolipoamide dehydrogenase LPD1; also called E3 subunit), and the assembly factor KGD4. Within OGDC, interacts (via N-terminus) with E3 subunit and (via C-terminus) with the complex core formed by E1 and E2 subunits.

The protein resides in the mitochondrion. In terms of biological role, molecular adapter that is necessary to a form a stable 2-oxoglutarate dehydrogenase enzyme complex (OGDC). Required for incorporation of the E3 subunit (LPD1) into the E1-E2 core (KGD1-KGD2) of mitochondrial OGDC, and acting as a stability factor for the fully assembled complex. The sequence is that of Alpha-ketoglutarate dehydrogenase subunit 4, mitochondrial from Saccharomyces cerevisiae (strain ATCC 204508 / S288c) (Baker's yeast).